We begin with the raw amino-acid sequence, 122 residues long: Large ribosomal subunit protein uL14 (122 aa).

The protein belongs to the universal ribosomal protein uL14 family. As to quaternary structure, part of the 50S ribosomal subunit. Forms a cluster with proteins L3 and L19. In the 70S ribosome, L14 and L19 interact and together make contacts with the 16S rRNA in bridges B5 and B8.

In terms of biological role, binds to 23S rRNA. Forms part of two intersubunit bridges in the 70S ribosome. The protein is Large ribosomal subunit protein uL14 of Hyphomonas neptunium (strain ATCC 15444).